The sequence spans 91 residues: Large ribosomal subunit protein uL22 (91 aa).

This sequence belongs to the universal ribosomal protein uL22 family. In terms of assembly, part of the 50S ribosomal subunit.

This protein binds specifically to 23S rRNA; its binding is stimulated by other ribosomal proteins, e.g. L4, L17, and L20. It is important during the early stages of 50S assembly. It makes multiple contacts with different domains of the 23S rRNA in the assembled 50S subunit and ribosome. Its function is as follows. The globular domain of the protein is located near the polypeptide exit tunnel on the outside of the subunit, while an extended beta-hairpin is found that lines the wall of the exit tunnel in the center of the 70S ribosome. The chain is Large ribosomal subunit protein uL22 (rplV) from Pigeon pea witches'-broom phytoplasma.